We begin with the raw amino-acid sequence, 148 residues long: [Ribosomal protein bS18]-alanine N-acetyltransferase (148 aa).

The N-acetyltransferase domain maps to 2–147; sequence NTISILSTTD…DAIIMALPIS (146 aa). Acetyl-CoA is bound by residues 69-71 and 77-82; these read IAV and RRGLGR. Residue E103 is the Proton acceptor of the active site. N108 provides a ligand contact to acetyl-CoA. Y115 (proton donor) is an active-site residue.

It belongs to the acetyltransferase family. RimI subfamily.

The protein localises to the cytoplasm. It carries out the reaction N-terminal L-alanyl-[ribosomal protein bS18] + acetyl-CoA = N-terminal N(alpha)-acetyl-L-alanyl-[ribosomal protein bS18] + CoA + H(+). In terms of biological role, acetylates the N-terminal alanine of ribosomal protein bS18. The protein is [Ribosomal protein bS18]-alanine N-acetyltransferase of Salmonella typhimurium (strain LT2 / SGSC1412 / ATCC 700720).